The following is a 471-amino-acid chain: DENN domain-containing protein 2D (471 aa).

Residues 55 to 204 (EYLLVVSLKK…AFPAPGKTVT (150 aa)) form the uDENN domain. The 134-residue stretch at 226-359 (HLEHVDFSSL…LQDDILDSLG (134 aa)) folds into the cDENN domain. The region spanning 361–445 (GINELKTAEQ…QEAEKSKNPP (85 aa)) is the dDENN domain.

In bronchial mucosa, mainly expressed in ciliated and basal epithelial cells and weakly in alveolar cells (at protein level). Tends to be down-regulated in lung cancers, immortalized bronchial epithelial cell lines and precancerous lesions.

The protein resides in the cytoplasm. Guanine nucleotide exchange factor (GEF) which may activate RAB9A and RAB9B. Promotes the exchange of GDP to GTP, converting inactive GDP-bound Rab proteins into their active GTP-bound form. The polypeptide is DENN domain-containing protein 2D (DENND2D) (Homo sapiens (Human)).